The primary structure comprises 977 residues: Vacuolar membrane protease (977 aa).

At 1–17 (MARSRTAGRCNPFAFYR) the chain is on the cytoplasmic side. The chain crosses the membrane as a helical span at residues 18 to 38 (VPVTVFVTLIYVALLAPIIVV). At 39 to 383 (HHILPAVPES…AFAVFEIHTL (345 aa)) the chain is on the vacuolar side. N113 and N116 each carry an N-linked (GlcNAc...) asparagine glycan. Zn(2+) contacts are provided by H166 and D178. The active-site Proton acceptor is the E212. Residues E213, E238, and H311 each contribute to the Zn(2+) site. Residues 384–404 (FALSVTLLIVGPLTLFITSII) traverse the membrane as a helical segment. Residues 405-438 (LANQDRMYLFGISVPVDDGFGSVPLRGWRGFFRF) lie on the Cytoplasmic side of the membrane. A helical transmembrane segment spans residues 439 to 459 (PFIFGSTTASVVALAYLMAKI). Topologically, residues 460 to 469 (NPMIAHSSEY) are vacuolar. A helical membrane pass occupies residues 470 to 490 (AVWSMMISAWVFVAWFLSRIA). Topologically, residues 491–500 (NFARPSALHR) are cytoplasmic. Residues 501 to 521 (IYVLTWMFLLTWVLLVITTVY) traverse the membrane as a helical segment. Residues 522–525 (ENRD) lie on the Vacuolar side of the membrane. Residues 526 to 546 (GIASGYFVIFYAFGTFMATWI) form a helical membrane-spanning segment. The Cytoplasmic portion of the chain corresponds to 547–659 (SYLELFSLPK…WSANLPKWTW (113 aa)). Residues 566-576 (GQISSRPTSLG) show a composition bias toward polar residues. The segment at 566-604 (GQISSRPTSLGGSRLLTPSGESVGQHPEDEEPTESTSLL) is disordered. Residues 660-680 (ILQFLLIAPIVIILIGQLGLL) traverse the membrane as a helical segment. Residues 681-696 (ITSAIHQTMQDGSSTL) are Vacuolar-facing. A helical transmembrane segment spans residues 697 to 717 (VPYLIIALLTTFLFMPTLPFI). Residues 718 to 726 (HRYTYHIPT) are Cytoplasmic-facing. The helical transmembrane segment at 727-747 (FLFLIFVATLVYNLVAFPFSG) threads the bilayer. Residues 748 to 977 (NNRTKLFFLQ…LVKGSRSFEV (230 aa)) are Vacuolar-facing. N-linked (GlcNAc...) asparagine glycosylation is found at N749 and N791.

The protein belongs to the peptidase M28 family. Zn(2+) serves as cofactor.

The protein localises to the vacuole membrane. May be involved in vacuolar sorting and osmoregulation. The chain is Vacuolar membrane protease from Talaromyces marneffei (strain ATCC 18224 / CBS 334.59 / QM 7333) (Penicillium marneffei).